The following is a 145-amino-acid chain: MAKSTILVALLALVLVAHASAMRRERGRQGDSSSCERQVDRVNLKPCEQHIMQRIMGEQEQYDSYDIRSTRSSDQQQRCCDELNEMENTQRCMCEALQQIMENQCDRLQDRQMVQQFKRELMNLPQQCNFRAPQRCDLDVSGGRC.

An N-terminal signal peptide occupies residues Met-1 to Ala-21. 5 disulfides stabilise this stretch: Cys-35–Cys-92, Cys-47–Cys-79, Cys-80–Cys-128, Cys-94–Cys-136, and Cys-105–Cys-145.

It belongs to the 2S seed storage albumins family. Expressed in seeds. Not expressed in roots, pegs (budding ovaries) or leaves.

This Arachis hypogaea (Peanut) protein is Conglutin.